Here is a 302-residue protein sequence, read N- to C-terminus: UPF0725 protein At1g23960 (302 aa).

At Ala-2 the chain carries N-acetylalanine.

Belongs to the UPF0725 (EMB2204) family.

This Arabidopsis thaliana (Mouse-ear cress) protein is UPF0725 protein At1g23960.